The following is a 208-amino-acid chain: Putative adhesin P1-like protein MPN_468 (208 aa).

Disordered regions lie at residues 29 to 49 (TNGSPAGNTSSTTQSNDVAPT) and 97 to 172 (DSKT…NLTP). The span at 100–132 (TQNNTTTNENHTKFASATGSGQQQGSTTTTSAG) shows a compositional bias: low complexity. Polar residues predominate over residues 145–158 (SGNSISVQEATSGD). Low complexity predominate over residues 159–172 (NLTNYTNLPPNLTP).

Belongs to the adhesin P1 family.

This is Putative adhesin P1-like protein MPN_468 from Mycoplasma pneumoniae (strain ATCC 29342 / M129 / Subtype 1) (Mycoplasmoides pneumoniae).